The sequence spans 477 residues: Probable cytosolic Fe-S cluster assembly factor GG21400 (477 aa).

Residues Cys-23, Cys-68, Cys-71, Cys-74, Cys-187, Cys-243, Cys-395, and Cys-399 each contribute to the [4Fe-4S] cluster site.

Belongs to the NARF family.

Functionally, component of the cytosolic iron-sulfur (Fe/S) protein assembly machinery. Required for maturation of extramitochondrial Fe/S proteins. The polypeptide is Probable cytosolic Fe-S cluster assembly factor GG21400 (Drosophila erecta (Fruit fly)).